Here is a 49-residue protein sequence, read N- to C-terminus: Large ribosomal subunit protein eL40 (49 aa).

Belongs to the eukaryotic ribosomal protein eL40 family.

This chain is Large ribosomal subunit protein eL40, found in Haloquadratum walsbyi (strain DSM 16790 / HBSQ001).